Consider the following 104-residue polypeptide: Growth-regulated protein homolog (104 aa).

Positions 1–31 are cleaved as a signal peptide; it reads MAPAATAAAPRLLRAALLLLLLVAAGRRAAG. 2 cysteine pairs are disulfide-bonded: C40–C66 and C42–C82.

This sequence belongs to the intercrine alpha (chemokine CxC) family.

Its subcellular location is the secreted. Its function is as follows. Plays a role in monocyte adhesion to the endothelium. In Oryctolagus cuniculus (Rabbit), this protein is Growth-regulated protein homolog.